We begin with the raw amino-acid sequence, 902 residues long: MFPALETHLKQTIPDPYEDFMYRHLQYYGYFKAQRGSLPNSATHQHVRKNNPQCLLNGSLGEKDDLIPDTLQKEKLLWPISLSSAVHRQIEAINRDFHSCLGWMQWRGLSSLQPPPPRFKDSPASAFRVAGITDSHMLSLPHLRSRQLLYDELDEVNPRLREPQELFSILSTKRPLQAPRWPIECEVIKENIHHIEWAPPQPEYFYQPKGNEKVPEIVGEKKGTVVYQLDSVPIEGSYFTSSRVGGKRGIVKELAVTLQGPEDNTLLFESRFESGNLQKAVRVDTYEYELTLRTDLYTNKHTQWFYFRVQNTRKDATYRFTIVNLLKPKSLYTVGMKPLLYSQLDANTRNIGWRREGNEIKYYKNNTDDGQQPFYCLTWTIQFPYDQDTCFFAHFYPYTYTDLQCYLLSVANNPIQSQFCKLQTLCRSLAGNTVYLLTITNPSQTPQEAAAKKAVVLSARVHPGESNGSWVMKGFLDFILSNSPDAQLLRDIFVFKVLPMLNPDGVIVGNYRCSLAGRDLNRHYKTILKESFPCIWYTRNMIKRLLEEREVLLYCDFHGHSRKNNIFLYGCNNNNRKYWLHERVFPLMLCKNAPDKFSFHSCNFKVQKCKEGTGRVVMWRMGILNSYTMESTFGGSTLGNKRDTHFTIEDLKSLGYHVCDTLLDFCDPDQMKFTQCLAELKELLRQEIHKKFHELGQDVDLEGSWSDISLSDIESSTSGSDSSLSDGLPVHLANIADELTQKKKMFKKKKKKSLQTRKQRNEQYQKKNLMQKLKLTEDTSEKAGFASTLQKQPTFFKNSENSSFLPMKNENPRLNETNLNRRDKDTPLDPSMATLILPKNKGRMQNKKPGFTVSCSPKRTINSSQEPAPGMKPNWPRSRYPATKRGCAAMAAYPSLHIYTYP.

The Peptidase M14 domain occupies 396–666; the sequence is YPYTYTDLQC…HVCDTLLDFC (271 aa). Zn(2+)-binding residues include His462, Glu465, and His558. Residue Glu630 is the Proton donor/acceptor of the active site. A compositionally biased stretch (basic residues) spans 746–758; that stretch reads FKKKKKKSLQTRK. Disordered regions lie at residues 746–770 and 796–879; these read FKKKKKKSLQTRKQRNEQYQKKNLM and FKNS…PRSR. Residues 853 to 866 show a composition bias toward polar residues; the sequence is VSCSPKRTINSSQE.

It belongs to the peptidase M14 family. Interacts with RARRES1, KIF11 AND MAPRE1. It depends on Zn(2+) as a cofactor.

It is found in the cytoplasm. It localises to the cytosol. The protein resides in the cytoskeleton. Its subcellular location is the microtubule organizing center. The protein localises to the centrosome. It is found in the centriole. It localises to the cilium basal body. It catalyses the reaction (L-glutamyl)(n+1)-gamma-L-glutamyl-L-glutamyl-[protein] + H2O = (L-glutamyl)(n)-gamma-L-glutamyl-L-glutamyl-[protein] + L-glutamate. With respect to regulation, inhibited by RARRES1. In terms of biological role, metallocarboxypeptidase that mediates deglutamylation of tubulin and non-tubulin target proteins. Catalyzes the removal of polyglutamate side chains present on the gamma-carboxyl group of glutamate residues within the C-terminal tail of tubulin protein. Specifically cleaves tubulin long-side-chains, while it is not able to remove the branching point glutamate. Also catalyzes the removal of polyglutamate residues from the carboxy-terminus of non-tubulin proteins such as MYLK. The polypeptide is Cytosolic carboxypeptidase 2 (Homo sapiens (Human)).